The chain runs to 234 residues: RPSWTVDSDSAKYSSFLDSLREEFGRGTPKVCNIPVTKKANNDKFVLVNLVLPFNRNTITLAFRASDAYLVGFQDRDSKTNKLRANFFSDEYRALSGKYKSIFTDAEVLAPALPCASTYTDLQNKAGVSREKLSLGVSSLQTAFTAVYGKVFTGKNVAKFALISIQMVAEAARFKYIEDQVINRGMYSSFEAGARITLLENNWSKISEQYHKSCKLGGGQFTEEEMKLGLLLYN.

A disulfide bridge connects residues C32 and C115. E170 is an active-site residue.

In terms of assembly, monomer.

It catalyses the reaction Endohydrolysis of the N-glycosidic bond at one specific adenosine on the 28S rRNA.. Its function is as follows. Ribosome-inactivating protein of type 1, inhibits protein synthesis in animal cells. Inhibits cell-free translation in rabbit reticulocyte lysate system with an IC(50) of 0.17 nM. The chain is Ribosome-inactivating protein lychnin from Silene chalcedonica (Maltese-cross).